Here is a 396-residue protein sequence, read N- to C-terminus: Argininosuccinate synthase (396 aa).

Residue 9 to 17 (AYSGGLDTS) participates in ATP binding. Residue tyrosine 85 coordinates L-citrulline. Glycine 115 provides a ligand contact to ATP. Threonine 117, asparagine 121, and aspartate 122 together coordinate L-aspartate. Asparagine 121 serves as a coordination point for L-citrulline. L-citrulline is bound by residues arginine 125, serine 173, glutamate 258, and tyrosine 270.

This sequence belongs to the argininosuccinate synthase family. Type 1 subfamily. As to quaternary structure, homotetramer.

It localises to the cytoplasm. The catalysed reaction is L-citrulline + L-aspartate + ATP = 2-(N(omega)-L-arginino)succinate + AMP + diphosphate + H(+). The protein operates within amino-acid biosynthesis; L-arginine biosynthesis; L-arginine from L-ornithine and carbamoyl phosphate: step 2/3. This chain is Argininosuccinate synthase, found in Streptococcus agalactiae serotype III (strain NEM316).